The following is a 1683-amino-acid chain: A-kinase anchor protein SPHKAP (1683 aa).

2 stretches are compositionally biased toward polar residues: residues 1–14 and 289–301; these read MDVNSRLSVQSNVE and AENTALQSLNPSA. Disordered stretches follow at residues 1–30, 275–320, and 582–601; these read MDVNSRLSVQSNVESPLMPEDSEPQQITSS, RMPS…ATNY, and LLPTPGASEERSSIGSLVTE. Positions 910–927 are PKA-RII subunit binding domain; that stretch reads FAEELAETVVSMATEIAA. Residues 960–983 are disordered; that stretch reads LKRKKENSGTGSTVRKHKPPRLSE. Phosphoserine occurs at positions 1006, 1066, 1088, 1101, 1102, 1105, 1240, and 1269. Disordered stretches follow at residues 1359-1387 and 1415-1518; these read VTEGNCSPVSSPSKMAPVKKPSGFDPTRE and ETDQ…DTSS. The segment covering 1362–1371 has biased composition (polar residues); sequence GNCSPVSSPS. Over residues 1469–1490 the composition is skewed to basic and acidic residues; the sequence is LETREELEVDVLKEDITLDESR. Low complexity predominate over residues 1492 to 1504; sequence PPSSSEESTGSWS.

Belongs to the AKAP110 family. In terms of assembly, interacts (via the PKA-RII subunit binding domain) with the RI subunit of PKA. Interacts with SPHK1; the interaction greatly reduces SPHK1 activity. Abundant in heart ventricle (at protein level).

It localises to the cytoplasm. In terms of biological role, anchoring protein that binds preferentially to the type I regulatory subunit of c-AMP-dependent protein kinase (PKA type I) and targets it to distinct subcellular compartments. May act as a converging factor linking cAMP and sphingosine signaling pathways. Plays a regulatory role in the modulation of SPHK1. This is A-kinase anchor protein SPHKAP (Sphkap) from Rattus norvegicus (Rat).